The primary structure comprises 89 residues: Small ribosomal subunit protein uS15 (89 aa).

This sequence belongs to the universal ribosomal protein uS15 family. Part of the 30S ribosomal subunit. Forms a bridge to the 50S subunit in the 70S ribosome, contacting the 23S rRNA.

One of the primary rRNA binding proteins, it binds directly to 16S rRNA where it helps nucleate assembly of the platform of the 30S subunit by binding and bridging several RNA helices of the 16S rRNA. In terms of biological role, forms an intersubunit bridge (bridge B4) with the 23S rRNA of the 50S subunit in the ribosome. The polypeptide is Small ribosomal subunit protein uS15 (Salinispora tropica (strain ATCC BAA-916 / DSM 44818 / JCM 13857 / NBRC 105044 / CNB-440)).